We begin with the raw amino-acid sequence, 67 residues long: UPF0337 protein CC_0938 (67 aa).

A disordered region spans residues 37 to 67 (AAQKAKGDLQNKVGKAQDKARRRDQALNARL). The segment covering 41–61 (AKGDLQNKVGKAQDKARRRDQ) has biased composition (basic and acidic residues).

The protein belongs to the UPF0337 (CsbD) family.

The sequence is that of UPF0337 protein CC_0938 from Caulobacter vibrioides (strain ATCC 19089 / CIP 103742 / CB 15) (Caulobacter crescentus).